The primary structure comprises 493 residues: Protein nucleotidyltransferase YdiU (493 aa).

ATP is bound by residues Gly81, Gly83, Arg84, Lys103, Asp115, Gly116, Arg166, and Arg173. The active-site Proton acceptor is the Asp244. Asn245 and Asp254 together coordinate Mg(2+). Asp254 is an ATP binding site.

Belongs to the SELO family. The cofactor is Mg(2+). Requires Mn(2+) as cofactor.

It catalyses the reaction L-seryl-[protein] + ATP = 3-O-(5'-adenylyl)-L-seryl-[protein] + diphosphate. It carries out the reaction L-threonyl-[protein] + ATP = 3-O-(5'-adenylyl)-L-threonyl-[protein] + diphosphate. The enzyme catalyses L-tyrosyl-[protein] + ATP = O-(5'-adenylyl)-L-tyrosyl-[protein] + diphosphate. The catalysed reaction is L-histidyl-[protein] + UTP = N(tele)-(5'-uridylyl)-L-histidyl-[protein] + diphosphate. It catalyses the reaction L-seryl-[protein] + UTP = O-(5'-uridylyl)-L-seryl-[protein] + diphosphate. It carries out the reaction L-tyrosyl-[protein] + UTP = O-(5'-uridylyl)-L-tyrosyl-[protein] + diphosphate. Nucleotidyltransferase involved in the post-translational modification of proteins. It can catalyze the addition of adenosine monophosphate (AMP) or uridine monophosphate (UMP) to a protein, resulting in modifications known as AMPylation and UMPylation. This Shewanella frigidimarina (strain NCIMB 400) protein is Protein nucleotidyltransferase YdiU.